A 114-amino-acid polypeptide reads, in one-letter code: MDIIKAIEQEQLKKDVPDFSIGDYVRVNVKVKEGNRERIQAFEGTVIAKKGSGISETFTVRKISYGVGVERIFPVHSPRVAGIEVIRKGKVRRAKLYYLRERVGKSAKVKTKLE.

Belongs to the bacterial ribosomal protein bL19 family.

In terms of biological role, this protein is located at the 30S-50S ribosomal subunit interface and may play a role in the structure and function of the aminoacyl-tRNA binding site. This Acetivibrio thermocellus (strain ATCC 27405 / DSM 1237 / JCM 9322 / NBRC 103400 / NCIMB 10682 / NRRL B-4536 / VPI 7372) (Clostridium thermocellum) protein is Large ribosomal subunit protein bL19.